We begin with the raw amino-acid sequence, 116 residues long: Large ribosomal subunit protein bL20c (116 aa).

It belongs to the bacterial ribosomal protein bL20 family.

It localises to the plastid. It is found in the chloroplast. Binds directly to 23S ribosomal RNA and is necessary for the in vitro assembly process of the 50S ribosomal subunit. It is not involved in the protein synthesizing functions of that subunit. The chain is Large ribosomal subunit protein bL20c (rpl20) from Marchantia polymorpha (Common liverwort).